Here is a 428-residue protein sequence, read N- to C-terminus: Histidinol dehydrogenase (428 aa).

Residues Y124, Q186, and N209 each contribute to the NAD(+) site. Residues S233, Q255, and H258 each coordinate substrate. The Zn(2+) site is built by Q255 and H258. Active-site proton acceptor residues include E322 and H323. Substrate contacts are provided by H323, D356, E410, and H415. D356 provides a ligand contact to Zn(2+). Position 415 (H415) interacts with Zn(2+).

Belongs to the histidinol dehydrogenase family. It depends on Zn(2+) as a cofactor.

The enzyme catalyses L-histidinol + 2 NAD(+) + H2O = L-histidine + 2 NADH + 3 H(+). It participates in amino-acid biosynthesis; L-histidine biosynthesis; L-histidine from 5-phospho-alpha-D-ribose 1-diphosphate: step 9/9. In terms of biological role, catalyzes the sequential NAD-dependent oxidations of L-histidinol to L-histidinaldehyde and then to L-histidine. The polypeptide is Histidinol dehydrogenase (Bacteroides fragilis (strain YCH46)).